The primary structure comprises 2411 residues: Polyprotein P1234 (2411 aa).

Residues 30-257 (EAVQTTPNDH…ESRKLLQSWH (228 aa)) enclose the Alphavirus-like MT domain. Residues 242–261 (GSTLYTESRKLLQSWHLPST) are nsP1 membrane-binding. S-palmitoyl cysteine; by host attachment occurs at residues Cys415 and Cys417. The (+)RNA virus helicase ATP-binding domain occupies 688–840 (ELVNPPFHEF…HDICSEVFHK (153 aa)). 719–726 (GVPGSGKS) contributes to the a ribonucleoside 5'-triphosphate binding site. The (+)RNA virus helicase C-terminal domain occupies 841-989 (SISRRCTQDI…IAEWEAEHQG (149 aa)). Residues 1002–1325 (NTFMNKVNVC…RKANSIFQNT (324 aa)) enclose the Peptidase C9 domain. A nucleolus localization signal region spans residues 1003–1022 (TFMNKVNVCWAKTLTPVLET). Cys1011 acts as the For cysteine protease nsP2 activity in catalysis. The Nuclear export signal signature appears at 1056 to 1065 (TKMYGFDLDT). The For cysteine protease nsP2 activity role is filled by His1081. The Nuclear localization signal motif lies at 1180–1184 (PNKKI). The 160-residue stretch at 1332–1491 (APAYRVKRGD…KIKEAIDHRT (160 aa)) folds into the Macro domain. Residues Asp1341, Asn1355, Gly1363, Gly1443, Ile1444, and Tyr1445 each coordinate ADP-D-ribose. 4 residues coordinate Zn(2+): Cys1593, Cys1595, Cys1618, and Cys1636. Positions 1681 to 1720 (DSSIGSLPVGDTRPIPAPRTIFRPVPAPRAPVLRTTPPPK) are disordered. 2 short sequence motifs (FGDF; binding to host G3BP1) span residues 1760–1763 (FGDF) and 1778–1781 (FGDF). In terms of domain architecture, RdRp catalytic spans 2165–2280 (DHVLETDIAS…HGIISDKLMA (116 aa)).

Interacts with non-structural protein 3. Interacts with RNA-directed RNA polymerase nsP4. Interacts with protease nsP2. interacts with itself. In terms of assembly, interacts with mRNA-capping enzyme nsP1. Interacts with host DDX1. Interacts with host DDX3. Interacts (via C-terminus) with host G3BP1; this interaction inhibits the formation of host stress granules on viral mRNAs and the nsp3-G3BP1 complexes bind viral RNAs and probably orchestrate the assembly of viral replication complexes. Interacts (via C-terminus) with host G3BP2; this interaction inhibits the formation of host stress granules on viral mRNAs and the nsp3-G3BP2 complexes bind viral RNAs and probably orchestrate the assembly of viral replication complexes. As to quaternary structure, interacts with mRNA-capping enzyme nsP1. Interacts with protease nsP2. interacts with itself. Interacts with RNA-directed RNA polymerase nsP4. Interacts with mRNA-capping enzyme nsP1. Interacts with KPNA1/karyopherin-alpha1; this interaction probably allows the active transport of protease nsP2 into the host nucleus. Requires Mg(2+) as cofactor. Mn(2+) serves as cofactor. In terms of processing, specific enzymatic cleavages in vivo yield mature proteins. The processing of the polyprotein is temporally regulated. In early stages (1.7 hpi), P1234 is first cleaved in trans through its nsP2 protease activity, releasing P123' and nsP4, which associate to form the early replication complex. At the same time, P1234 is also cut at the nsP1/nsP2 site early in infection but with lower efficiency. After replication of the viral minus-strand RNAs (4 hpi), the polyproteins are cut at the nsP1/nsP2 and nsP2/nsP3 sites very efficiently, preventing accumulation of P123' and P1234 and allowing the formation of the late replication complex. NsP3'/nsP4 site is not cleaved anymore and P34 is produced rather than nsP4. Post-translationally, specific enzymatic cleavages in vivo yield mature proteins. The processing of the polyprotein is temporally regulated. In early stages (1.7 hpi), P123 is cleaved at the nsP1/nsP2 site with low efficiency. After replication of the viral minus-strand RNAs (4 hpi), the polyproteins are cut at the nsP1/nsP2 and nsP2/nsP3 sites very efficiently, preventing accumulation of P123 and allowing the formation of the late replication complex. Specific enzymatic cleavages in vivo yield mature proteins. The processing of the polyprotein is temporally regulated. In early stages (1.7 hpi), P123' is cleaved at the nsP1/nsP2 site with low efficiency. After replication of the viral minus-strand RNAs (4 hpi), the polyproteins are cut at the nsP1/nsP2 and nsP2/nsP3 sites very efficiently, preventing accumulation of P123' and allowing the formation of the late replication complex. In terms of processing, palmitoylated by host palmitoyltransferases ZDHHC2 and ZDHHC19. Post-translationally, phosphorylated by host on serines and threonines. Ubiquitinated; targets the protein for rapid degradation via the ubiquitin system. Nsp4 is present in extremely low quantities due to low frequency of translation through the amber stop-codon and the degradation by the ubiquitin pathway.

Its subcellular location is the host cytoplasmic vesicle membrane. It is found in the host cell membrane. It localises to the host cell projection. The protein localises to the host filopodium. The protein resides in the host nucleus. Its subcellular location is the host cytoplasm. The catalysed reaction is GTP + S-adenosyl-L-methionine = N(7)-methyl-GTP + S-adenosyl-L-homocysteine. It catalyses the reaction N(7)-methyl-GTP + L-histidyl-[protein] = N(tele)-(N(7)-methylguanosine 5'-phospho)-L-histidyl-[protein] + diphosphate. It carries out the reaction N(tele)-(N(7)-methylguanosine 5'-phospho)-L-histidyl-[protein] + a 5'-end diphospho-(purine-ribonucleoside) in mRNA + H(+) = a 5'-end (N(7)-methyl 5'-triphosphoguanosine)-(purine-ribonucleoside) in mRNA + L-histidyl-[protein]. The enzyme catalyses a 5'-end triphospho-ribonucleoside in mRNA + H2O = a 5'-end diphospho-ribonucleoside in mRNA + phosphate + H(+). The catalysed reaction is a ribonucleoside 5'-triphosphate + H2O = a ribonucleoside 5'-diphosphate + phosphate + H(+). It catalyses the reaction ATP + H2O = ADP + phosphate + H(+). It carries out the reaction RNA(n) + a ribonucleoside 5'-triphosphate = RNA(n+1) + diphosphate. The enzyme catalyses RNA(n) + ATP = RNA(n)-3'-adenine ribonucleotide + diphosphate. The catalysed reaction is 4-O-(ADP-D-ribosyl)-L-aspartyl-[protein] + H2O = L-aspartyl-[protein] + ADP-D-ribose + H(+). It catalyses the reaction 5-O-(ADP-D-ribosyl)-L-glutamyl-[protein] + H2O = L-glutamyl-[protein] + ADP-D-ribose + H(+). It carries out the reaction ADP-alpha-D-ribose 1''-phosphate + H2O = ADP-D-ribose + phosphate. In terms of biological role, inactive precursor of the viral replicase, which is activated by cleavages carried out by the viral protease nsP2. Its function is as follows. The early replication complex formed by the polyprotein P123 and nsP4 synthesizes minus-strand RNAs. As soon P123 is cleaved into mature proteins, the plus-strand RNAs synthesis begins. Functionally, the early replication complex formed by the polyprotein P123' and nsP4 synthesizes minus-strand RNAs. Polyprotein P123' is a short-lived polyprotein that accumulates during early stage of infection. As soon P123' is cleaved into mature proteins, the plus-strand RNAs synthesis begins. Cytoplasmic capping enzyme that catalyzes two virus-specific reactions: methyltransferase and nsP1 guanylyltransferase. mRNA-capping is necessary since all viral RNAs are synthesized in the cytoplasm, and host capping enzymes are restricted to the nucleus. The enzymatic reaction involves a covalent link between 7-methyl-GMP and nsP1, whereas eukaryotic capping enzymes form a covalent complex only with GMP. nsP1 capping consists in the following reactions: GTP is first methylated into 7-methyl-GMP and then is covalently linked to nsP1 to form the m7GMp-nsP1 complex from which 7-methyl-GMP complex is transferred to the mRNA to create the cap structure. NsP1 is needed for the initiation of the minus-strand RNAs synthesis. Probably serves as a membrane anchor for the replication complex composed of nsP1-nsP4. Palmitoylated nsP1 is remodeling host cell cytoskeleton, and induces filopodium-like structure formation at the surface of the host cell. In terms of biological role, multifunctional protein whose N-terminus is part of the RNA polymerase complex and displays NTPase, RNA triphosphatase and helicase activities. NTPase and RNA triphosphatase are involved in viral RNA capping and helicase keeps a check on the dsRNA replication intermediates. The C-terminus harbors a protease that specifically cleaves the polyproteins and releases the mature proteins. Required for the shutoff of minus-strand RNAs synthesis. Specifically inhibits the host IFN response by promoting the nuclear export of host STAT1. Also inhibits host transcription by inducing rapid proteasome-dependent degradation of POLR2A, a catalytic subunit of the RNAPII complex. The resulting inhibition of cellular protein synthesis serves to ensure maximal viral gene expression and to evade host immune response. Its function is as follows. Seems to be essential for minus-strand RNAs and subgenomic 26S mRNAs synthesis. Displays mono-ADP-ribosylhydrolase activity. ADP-ribosylation is a post-translational modification that controls various processes of the host cell and the virus probably needs to revert it for optimal viral replication. Binds proteins of FXR family and sequesters them into the viral RNA replication complexes thereby inhibiting the formation of host stress granules on viral mRNAs. The nsp3-FXR complexes bind viral RNAs and probably orchestrate the assembly of viral replication complexes, thanks to the ability of FXR family members to self-assemble and bind DNA. Functionally, seems to be essential for minus-strand RNAs and subgenomic 26S mRNAs synthesis. Displays mono-ADP-ribosylhydrolase activity. ADP-ribosylation is a post-translantional modification that controls various processes of the host cell and the virus probably needs to revert it for optimal viral replication. Binds proteins of G3BP family and sequesters them into the viral RNA replication complexes thereby inhibiting the formation of host stress granules on viral mRNAs. The nsp3'-G3BP complexes bind viral RNAs and probably orchestrate the assembly of viral replication complexes, thanks to the ability of G3BP family members to self-assemble and bind DNA. RNA dependent RNA polymerase. Replicates genomic and antigenomic RNA by recognizing replications specific signals. The early replication complex formed by the polyprotein P123 and nsP4 synthesizes minus-strand RNAs. The late replication complex composed of fully processed nsP1-nsP4 is responsible for the production of genomic and subgenomic plus-strand RNAs. The core catalytic domain of nsP4 also possesses terminal adenylyltransferase (TATase) activity that is probably involved in maintenance and repair of the poly(A) tail, an element required for replication of the viral genome. This is Polyprotein P1234 from Barmah forest virus (BFV).